We begin with the raw amino-acid sequence, 338 residues long: Ornithine carbamoyltransferase (338 aa).

Carbamoyl phosphate contacts are provided by residues arginine 116 and 143–146 (HPCQ). Residues asparagine 174, aspartate 235, and 239-240 (SM) contribute to the L-ornithine site. The carbamoyl phosphate site is built by cysteine 275 and arginine 303.

It belongs to the aspartate/ornithine carbamoyltransferase superfamily. OTCase family.

The protein resides in the cytoplasm. It catalyses the reaction carbamoyl phosphate + L-ornithine = L-citrulline + phosphate + H(+). Its pathway is amino-acid biosynthesis; L-arginine biosynthesis; L-arginine from L-ornithine and carbamoyl phosphate: step 1/3. Its function is as follows. Reversibly catalyzes the transfer of the carbamoyl group from carbamoyl phosphate (CP) to the N(epsilon) atom of ornithine (ORN) to produce L-citrulline. This Chlorobaculum tepidum (strain ATCC 49652 / DSM 12025 / NBRC 103806 / TLS) (Chlorobium tepidum) protein is Ornithine carbamoyltransferase.